A 166-amino-acid chain; its full sequence is uncharacterized protein (166 aa).

3 4Fe-4S ferredoxin-type domains span residues 44-73 (AREDLFSAVCNGCGECASACPNGLIQLKQQ), 75-104 (ATLEIDYAPCDLCGKCAEVCPTNALHPNFP), and 139-166 (STLEIDNERCNGCGECKITCFVAAITLK). [4Fe-4S] cluster is bound by residues cysteine 53, cysteine 56, cysteine 59, cysteine 63, cysteine 84, cysteine 87, cysteine 90, and cysteine 94.

This is an uncharacterized protein from Haemophilus influenzae (strain ATCC 51907 / DSM 11121 / KW20 / Rd).